Reading from the N-terminus, the 318-residue chain is Retinol dehydrogenase 5 (318 aa).

A helical membrane pass occupies residues 1 to 21 (MWLPLLLGALLWAVLWLLRDR). The Lumenal portion of the chain corresponds to 22 to 288 (QSLPASNAFV…TRYSPGWDAK (267 aa)). Position 32 to 56 (32 to 56 (FITGCDSGFGRLLALQLDQRGFRVL)) interacts with NADP(+). N160 carries an N-linked (GlcNAc...) asparagine glycan. Residue S163 participates in substrate binding. Y175 (proton acceptor) is an active-site residue. A helical transmembrane segment spans residues 289 to 309 (LLWLPASYLPASLVDAVLTWV). Residues 310–318 (LPKPAQAVY) lie on the Cytoplasmic side of the membrane.

The protein belongs to the short-chain dehydrogenases/reductases (SDR) family. Homodimer. Widely expressed. In the eye, abundant in the retinal pigment epithelium.

Its subcellular location is the endoplasmic reticulum membrane. The catalysed reaction is 11-cis-retinol + NAD(+) = 11-cis-retinal + NADH + H(+). The enzyme catalyses 9-cis-retinol + NAD(+) = 9-cis-retinal + NADH + H(+). It carries out the reaction 13-cis-retinol + NAD(+) = 13-cis-retinal + NADH + H(+). It catalyses the reaction androsterone + NAD(+) = 5alpha-androstan-3,17-dione + NADH + H(+). The catalysed reaction is 5alpha-androstane-3alpha,17beta-diol + NAD(+) = 17beta-hydroxy-5alpha-androstan-3-one + NADH + H(+). It functions in the pathway cofactor metabolism; retinol metabolism. With respect to regulation, inhibited by 9-cis-, 13-cis- and all-trans-retinoic acids, with the most potent inhibitor being 13-cis-retinoic acid. Weakly inhibited by oleic acid. In terms of biological role, catalyzes the oxidation of cis-isomers of retinol, including 11-cis-, 9-cis-, and 13-cis-retinol in an NAD-dependent manner. Has no activity towards all-trans retinal. Plays a significant role in 11-cis retinol oxidation in the retinal pigment epithelium cells (RPE). Also recognizes steroids (androsterone, androstanediol) as its substrates. This Homo sapiens (Human) protein is Retinol dehydrogenase 5.